Consider the following 119-residue polypeptide: Large ribosomal subunit protein uL14 (119 aa).

Belongs to the universal ribosomal protein uL14 family. As to quaternary structure, part of the 50S ribosomal subunit. Forms a cluster with proteins L3 and L19. In the 70S ribosome, L14 and L19 interact and together make contacts with the 16S rRNA in bridges B5 and B8.

Binds to 23S rRNA. Forms part of two intersubunit bridges in the 70S ribosome. This chain is Large ribosomal subunit protein uL14, found in Neorickettsia sennetsu (strain ATCC VR-367 / Miyayama) (Ehrlichia sennetsu).